The following is a 356-amino-acid chain: Tyrosine recombinase XerS (356 aa).

The 106-residue stretch at 16 to 121 folds into the Core-binding (CB) domain; the sequence is IMPWYVLEYY…ALSSLYKYLT (106 aa). A Tyr recombinase domain is found at 169 to 354; the sequence is GFLTYIDQEY…VNDEQKNALD (186 aa). Residues arginine 210, lysine 234, histidine 306, arginine 309, and histidine 332 contribute to the active site. Residue tyrosine 341 is the O-(3'-phospho-DNA)-tyrosine intermediate of the active site.

Belongs to the 'phage' integrase family. XerS subfamily.

The protein resides in the cytoplasm. FtsK is required for recombination. In terms of biological role, site-specific tyrosine recombinase, which acts by catalyzing the cutting and rejoining of the recombining DNA molecules. Essential to convert dimers of the bacterial chromosome into monomers to permit their segregation at cell division. The protein is Tyrosine recombinase XerS of Streptococcus pneumoniae (strain Hungary19A-6).